The sequence spans 232 residues: Small ribosomal subunit protein uS5 (232 aa).

A disordered region spans residues 1–47 (MAAEVTETAQPVETAASTDNNREQREPRRGGRERNPNRDRGNRDADK). Residues 7-19 (ETAQPVETAASTD) show a composition bias toward polar residues. Positions 20–47 (NNREQREPRRGGRERNPNRDRGNRDADK) are enriched in basic and acidic residues. The S5 DRBM domain maps to 50–113 (FLERVVTINR…EEAKKNFFRV (64 aa)).

It belongs to the universal ribosomal protein uS5 family. In terms of assembly, part of the 30S ribosomal subunit. Contacts proteins S4 and S8.

In terms of biological role, with S4 and S12 plays an important role in translational accuracy. Functionally, located at the back of the 30S subunit body where it stabilizes the conformation of the head with respect to the body. The polypeptide is Small ribosomal subunit protein uS5 (Leifsonia xyli subsp. xyli (strain CTCB07)).